Reading from the N-terminus, the 460-residue chain is L-seryl-tRNA(Sec) selenium transferase (460 aa).

At K293 the chain carries N6-(pyridoxal phosphate)lysine.

This sequence belongs to the SelA family. It depends on pyridoxal 5'-phosphate as a cofactor.

It localises to the cytoplasm. It carries out the reaction L-seryl-tRNA(Sec) + selenophosphate + H(+) = L-selenocysteinyl-tRNA(Sec) + phosphate. It functions in the pathway aminoacyl-tRNA biosynthesis; selenocysteinyl-tRNA(Sec) biosynthesis; selenocysteinyl-tRNA(Sec) from L-seryl-tRNA(Sec) (bacterial route): step 1/1. In terms of biological role, converts seryl-tRNA(Sec) to selenocysteinyl-tRNA(Sec) required for selenoprotein biosynthesis. The sequence is that of L-seryl-tRNA(Sec) selenium transferase from Haemophilus ducreyi (strain 35000HP / ATCC 700724).